Consider the following 53-residue polypeptide: Membrane antigen containing repeating peptides (53 aa).

6 consecutive repeat copies span residues 1-10 (EAEEAARLQA), 11-20 (EAEEAARQQA), 21-30 (EAEEAARLQA), 31-40 (EAEEAARLQA), 41-50 (EAEEAARLQA), and 51-53 (EAE). Positions 1-53 (EAEEAARLQAEAEEAARQQAEAEEAARLQAEAEEAARLQAEAEEAARLQAEAE) are 6 X 10 AA tandem repeats. The disordered stretch occupies residues 1–53 (EAEEAARLQAEAEEAARQQAEAEEAARLQAEAEEAARLQAEAEEAARLQAEAE).

Its subcellular location is the membrane. The chain is Membrane antigen containing repeating peptides from Leishmania major.